The primary structure comprises 380 residues: MSDSPIKYRLIKKEKHTGARLGEIITPHGTFPTPMFMPVGTQATVKTQSPEELKEMGSGIILSNTYHLWLRPGDELIARAGGLHKFMNWDQPILTDSGGFQVYSLADSRNITEEGVTFKNHLNGSKMFLSPEKAISIQNNLGSDIMMSFDECPQFYQPYDYVKKSIERTSRWAERGLKAHRRPHDQGLFGIVQGAGFEDLRRQSAHDLVSMDFSGYSIGGLAVGETHEEMNAVLDFTTQLLPENKPRYLMGVGAPDSLIDGVIRGVDMFDCVLPTRIARNGTCMTSQGRLVVKNAQFAEDFTPLDPECDCYTCNNYTRAYLRHLLKADETFGIRLTSYHNLYFLLNLMKQVRQAIMDDNLLEFRKYFVEKYGYNKSGRNF.

The active-site Proton acceptor is the aspartate 96. Substrate is bound by residues 96 to 100 (DSGGF), aspartate 150, glutamine 193, and glycine 220. The tract at residues 251-257 (GVGAPDS) is RNA binding. Aspartate 270 serves as the catalytic Nucleophile. The segment at 275-279 (TRIAR) is RNA binding; important for wobble base 34 recognition. Residues cysteine 308, cysteine 310, cysteine 313, and histidine 339 each contribute to the Zn(2+) site.

It belongs to the queuine tRNA-ribosyltransferase family. Homodimer. Within each dimer, one monomer is responsible for RNA recognition and catalysis, while the other monomer binds to the replacement base PreQ1. Zn(2+) is required as a cofactor.

It carries out the reaction 7-aminomethyl-7-carbaguanine + guanosine(34) in tRNA = 7-aminomethyl-7-carbaguanosine(34) in tRNA + guanine. It functions in the pathway tRNA modification; tRNA-queuosine biosynthesis. In terms of biological role, catalyzes the base-exchange of a guanine (G) residue with the queuine precursor 7-aminomethyl-7-deazaguanine (PreQ1) at position 34 (anticodon wobble position) in tRNAs with GU(N) anticodons (tRNA-Asp, -Asn, -His and -Tyr). Catalysis occurs through a double-displacement mechanism. The nucleophile active site attacks the C1' of nucleotide 34 to detach the guanine base from the RNA, forming a covalent enzyme-RNA intermediate. The proton acceptor active site deprotonates the incoming PreQ1, allowing a nucleophilic attack on the C1' of the ribose to form the product. After dissociation, two additional enzymatic reactions on the tRNA convert PreQ1 to queuine (Q), resulting in the hypermodified nucleoside queuosine (7-(((4,5-cis-dihydroxy-2-cyclopenten-1-yl)amino)methyl)-7-deazaguanosine). This chain is Queuine tRNA-ribosyltransferase, found in Streptococcus pneumoniae (strain Taiwan19F-14).